The chain runs to 758 residues: Dolichyl-phosphooligosaccharide-protein glycotransferase 2 (758 aa).

Topologically, residues 1 to 6 (MKRRYS) are cytoplasmic. A helical transmembrane segment spans residues 7–27 (ILIILLVAIFYRMITFRFKYL). Topologically, residues 28–92 (LGYDPYFHLA…KVFGVSLTTT (65 aa)) are extracellular. The short motif at 29–31 (GYD) is the DXD motif 1 element. Aspartate 31 provides a ligand contact to Mn(2+). The helical transmembrane segment at 93–113 (FKITPVIFGVLTVIFLYLSLL) threads the bilayer. At 114 to 120 (KLYDEKR) the chain is on the cytoplasmic side. A helical membrane pass occupies residues 121–141 (AFFGGFFLAISYGHVFRSMAN). Residues 142–145 (YYRG) lie on the Extracellular side of the membrane. Mn(2+) is bound by residues arginine 144 and aspartate 146. A DXD motif 2 motif is present at residues 144 to 146 (RGD). The helical transmembrane segment at 146 to 166 (DNYMLFWYSVALLGISLALGI) threads the bilayer. Topologically, residues 167–175 (KKGKWKYKR) are cytoplasmic. Transmembrane regions (helical) follow at residues 176–196 (LIFY…WQAY) and 197–217 (YPIF…AFIL). At 218 to 226 (KKDKYLLDS) the chain is on the cytoplasmic side. The helical transmembrane segment at 227-247 (IILILSTAFGVLLANYLGGIF) threads the bilayer. Residues 248 to 281 (GYGMLGYAKWLGKSVAKKLGLEFGYLKDVYLILH) lie on the Extracellular side of the membrane. The helical transmembrane segment at 282-302 (LKYLVPISLSFVLVLILLGFL) threads the bilayer. Over 303–310 (TKDIRIRS) the chain is Cytoplasmic. The chain crosses the membrane as a helical span at residues 311-331 (LFLGIASFIGIIILFKRFEAL). The Extracellular portion of the chain corresponds to 332–352 (KELSTGFGIFKEAPILETQPT). The TIXE motif signature appears at 340–343 (IFKE). The helical transmembrane segment at 353–373 (SFKDLWAAFSLSFFLTPLFFI) threads the bilayer. The Cytoplasmic segment spans residues 374-379 (RFKKPR). A helical transmembrane segment spans residues 380 to 400 (VEDFLTLGLIIPSVYMLKTWT). Residue arginine 401 is a topological domain, extracellular. Arginine 401 contacts a glycophospholipid. A helical transmembrane segment spans residues 402–422 (FLFIGSMAIAIMSGIGIVELY). The Cytoplasmic segment spans residues 423–433 (EAIKPRLNGKK). A helical membrane pass occupies residues 434–454 (ALATGIITLVILPGVIAGLSF). The Extracellular portion of the chain corresponds to 455–758 (KEVCSLHPEM…DRGVFRLSYN (304 aa)). Positions 488–490 (WWD) are interacts with target acceptor peptide in protein substrate. The WWDYG motif signature appears at 488–492 (WWDWG). The DK motif motif lies at 540-547 (DFLKFGAI).

Belongs to the STT3 family. Mn(2+) serves as cofactor. The cofactor is Mg(2+).

It localises to the cell membrane. The catalysed reaction is an archaeal dolichyl phosphooligosaccharide + [protein]-L-asparagine = an archaeal dolichyl phosphate + a glycoprotein with the oligosaccharide chain attached by N-beta-D-glycosyl linkage to a protein L-asparagine.. Its pathway is protein modification; protein glycosylation. Functionally, oligosaccharyl transferase (OST) that catalyzes the initial transfer of a defined glycan (ManNAcXyl(2)GlcAMan(2)GalNAc in Pyrococcus) from the lipid carrier dolichol-monophosphate to an asparagine residue within an Asn-X-Ser/Thr consensus motif in nascent polypeptide chains, the first step in protein N-glycosylation. This Pyrococcus horikoshii (strain ATCC 700860 / DSM 12428 / JCM 9974 / NBRC 100139 / OT-3) protein is Dolichyl-phosphooligosaccharide-protein glycotransferase 2 (aglB2).